The following is a 348-amino-acid chain: WD repeat-containing protein JIP5 (348 aa).

WD repeat units lie at residues 5–44 (KLKNQPFDVAFHPKEPVVFSSLLTGQVCAWSYDDATGETS), 51–90 (PSKRTARALSIEENGDEIWMGGKSGSLFQLSTRDGSMTRE), 94–132 (AHECPINRVYCVNRNLVATGDDDGVIKLWDPRQADSIRT), 135–174 (QHFDYISDFTYFDDKRQLVATSGDGHLSVIDIRSNKSTPL), 179–218 (DQEDELLSIVPIKGGQKAIVGSGLGILSVWNRQMGWADSV), 223–261 (GHPASIDAIVALTPDIIATGSEDGMIRVIQVLPHKFLGV), and 264–304 (THEE…EDSD). Residues 299 to 318 (LFEDSDEDDEMEEDEPDSDE) are compositionally biased toward acidic residues. Residues 299-348 (LFEDSDEDDEMEEDEPDSDEEKSKKKKKDNGMKDMSRGQAENDGSFFADL) are disordered.

It belongs to the WD repeat WDR55 family.

The protein resides in the nucleus. It localises to the nucleolus. The polypeptide is WD repeat-containing protein JIP5 (JIP5) (Cryptococcus neoformans var. neoformans serotype D (strain JEC21 / ATCC MYA-565) (Filobasidiella neoformans)).